We begin with the raw amino-acid sequence, 450 residues long: uncharacterized protein (450 aa).

Positions 1 to 58 constitute a TRAM domain; sequence MQKNQIVDLEITDLSYEAMGVAHLDGMTVFVNNALPGEIVSAKLLKVKKNFAFAKIEK. Residues Gln280, Tyr309, Glu330, and Asp378 each contribute to the S-adenosyl-L-methionine site. The active-site Nucleophile is the Cys405.

It belongs to the class I-like SAM-binding methyltransferase superfamily. RNA M5U methyltransferase family.

This is an uncharacterized protein from Lactobacillus johnsonii (strain CNCM I-12250 / La1 / NCC 533).